Reading from the N-terminus, the 312-residue chain is Structure-specific endonuclease subunit SLX1 (312 aa).

Positions 9-92 (DFYGCYLLQS…QHGYQTRYIK (84 aa)) constitute a GIY-YIG domain. The SLX1-type zinc finger occupies 219-282 (CQFCNKIIKH…IPQSPKCPKC (64 aa)).

This sequence belongs to the SLX1 family. As to quaternary structure, forms a heterodimer with SLX4. The cofactor is a divalent metal cation.

The protein resides in the nucleus. Its function is as follows. Catalytic subunit of the SLX1-SLX4 structure-specific endonuclease that resolves DNA secondary structures generated during DNA repair and recombination. Has endonuclease activity towards branched DNA substrates, introducing single-strand cuts in duplex DNA close to junctions with ss-DNA. This chain is Structure-specific endonuclease subunit SLX1, found in Candida glabrata (strain ATCC 2001 / BCRC 20586 / JCM 3761 / NBRC 0622 / NRRL Y-65 / CBS 138) (Yeast).